Here is an 84-residue protein sequence, read N- to C-terminus: Large ribosomal subunit protein bL27 (84 aa).

Residues 1 to 21 are disordered; sequence MAHKKGAGSTKNGRDSKPKML.

The protein belongs to the bacterial ribosomal protein bL27 family.

The polypeptide is Large ribosomal subunit protein bL27 (Dehalococcoides mccartyi (strain ATCC BAA-2100 / JCM 16839 / KCTC 5957 / BAV1)).